A 181-amino-acid chain; its full sequence is Transcriptional repressor NrdR (181 aa).

A zinc finger spans residues 3-34; sequence CLFCQHTDTRVIDSRVSEDGATIRRRRECEAC. The 91-residue stretch at 49 to 139 folds into the ATP-cone domain; that stretch reads PVIIKKDGGR…VYRSFQDVAD (91 aa).

This sequence belongs to the NrdR family. Zn(2+) serves as cofactor.

Its function is as follows. Negatively regulates transcription of bacterial ribonucleotide reductase nrd genes and operons by binding to NrdR-boxes. The chain is Transcriptional repressor NrdR from Xylella fastidiosa (strain M12).